Here is a 183-residue protein sequence, read N- to C-terminus: uncharacterized protein (183 aa).

The Macro domain occupies 1 to 182 (MFRVVHGDIT…VALKVLERDE (182 aa)).

This is an uncharacterized protein from Pyrococcus abyssi (strain GE5 / Orsay).